The chain runs to 160 residues: 3-dehydroquinate dehydratase (160 aa).

Tyrosine 28 acts as the Proton acceptor in catalysis. 3 residues coordinate substrate: asparagine 79, histidine 85, and aspartate 92. Histidine 105 functions as the Proton donor in the catalytic mechanism. Substrate-binding positions include 106-107 (MS) and arginine 116.

This sequence belongs to the type-II 3-dehydroquinase family. As to quaternary structure, homododecamer.

It catalyses the reaction 3-dehydroquinate = 3-dehydroshikimate + H2O. Its pathway is metabolic intermediate biosynthesis; chorismate biosynthesis; chorismate from D-erythrose 4-phosphate and phosphoenolpyruvate: step 3/7. Catalyzes a trans-dehydration via an enolate intermediate. The protein is 3-dehydroquinate dehydratase of Gloeobacter violaceus (strain ATCC 29082 / PCC 7421).